Reading from the N-terminus, the 220-residue chain is Glutathione S-transferase-like protein FUS3 (220 aa).

The GST N-terminal domain maps to Ser3–Ser84. The GST C-terminal domain occupies Asp90–Lys220.

This sequence belongs to the GST superfamily.

Functionally, glutathione S-transferase-like protein; part of the gene cluster that mediates the biosynthesis of the mycotoxin fusarin C. Within the cluster, FUS1, FUS2, FUS8 and FUS9 are sufficient for fusarin production. The other FUS cluster members are not essential for fusarin C biosynthesis. This is Glutathione S-transferase-like protein FUS3 from Gibberella moniliformis (strain M3125 / FGSC 7600) (Maize ear and stalk rot fungus).